Reading from the N-terminus, the 160-residue chain is Sperm protein associated with the nucleus on the X chromosome N2 (160 aa).

Disordered stretches follow at residues 1 to 48 (MEKP…TSEY) and 64 to 160 (SNQL…GEED). Over residues 10 to 35 (GEKRKSPCDSNNRNDEMQETPNRDLA) the composition is skewed to basic and acidic residues. Over residues 64–79 (SNQLENDQSQENSVNP) the composition is skewed to polar residues. Over residues 81–97 (QEEEDEGSSQEDEDLDS) the composition is skewed to acidic residues. A compositionally biased stretch (basic and acidic residues) spans 136–148 (SSERSSQEEKDPD).

Belongs to the SPAN-X family.

The polypeptide is Sperm protein associated with the nucleus on the X chromosome N2 (SPANXN2) (Pongo pygmaeus (Bornean orangutan)).